The primary structure comprises 349 residues: S-adenosylmethionine:tRNA ribosyltransferase-isomerase (349 aa).

It belongs to the QueA family. In terms of assembly, monomer.

The protein localises to the cytoplasm. The catalysed reaction is 7-aminomethyl-7-carbaguanosine(34) in tRNA + S-adenosyl-L-methionine = epoxyqueuosine(34) in tRNA + adenine + L-methionine + 2 H(+). It participates in tRNA modification; tRNA-queuosine biosynthesis. Transfers and isomerizes the ribose moiety from AdoMet to the 7-aminomethyl group of 7-deazaguanine (preQ1-tRNA) to give epoxyqueuosine (oQ-tRNA). This is S-adenosylmethionine:tRNA ribosyltransferase-isomerase from Pseudomonas entomophila (strain L48).